Reading from the N-terminus, the 569-residue chain is ATP-dependent RNA helicase dhh1 (569 aa).

Positions 1–16 (MSDQLADQLKATSLSS) are enriched in polar residues. Residues 1 to 39 (MSDQLADQLKATSLSSGPEDWKKGLNLPARDTRQQTEDV) form a disordered region. Residues 45–73 (LDWEDFIHDRDLLMGIFEAGFEKPSPIQE) carry the Q motif motif. The 171-residue stretch at 76-246 (IPVALTGRDI…DKNMTSPYEI (171 aa)) folds into the Helicase ATP-binding domain. 89-96 (AKNGTGKT) contributes to the ATP binding site. Positions 194-197 (DEAD) match the DEAD box motif. In terms of domain architecture, Helicase C-terminal spans 256 to 416 (GITQYYAFVE…PIPQTIDKSL (161 aa)). Positions 436–569 (AQQPQQQLQQ…GQPQGPLSAQ (134 aa)) are disordered. Residues 437–482 (QQPQQQLQQSQRPQQSQQQQHFSTQTQPSNQLPPQQGNQQLGFNPQ) show a composition bias toward low complexity. Polar residues predominate over residues 495–520 (GDWQGQNGRQNGTGASNNQPRPTNYQ). A compositionally biased stretch (gly residues) spans 529 to 542 (SRGGRGRGFQGQGG). Residues 543-569 (RQNQNYGGQRGPRTQGQGQPQGPLSAQ) show a composition bias toward low complexity.

The protein belongs to the DEAD box helicase family. DDX6/DHH1 subfamily.

The protein localises to the cytoplasm. It localises to the P-body. It catalyses the reaction ATP + H2O = ADP + phosphate + H(+). In terms of biological role, ATP-dependent RNA helicase involved in mRNA turnover, and more specifically in mRNA decapping. Is involved in G1/S DNA-damage checkpoint recovery, probably through the regulation of the translational status of a subset of mRNAs. May also have a role in translation and mRNA nuclear export. The polypeptide is ATP-dependent RNA helicase dhh1 (drh-10) (Neurospora crassa (strain ATCC 24698 / 74-OR23-1A / CBS 708.71 / DSM 1257 / FGSC 987)).